The chain runs to 578 residues: Membrane protein insertase YidC (578 aa).

A helical transmembrane segment spans residues 3 to 23; that stretch reads IQRSILIVALAVVSYLLVLQW. The tract at residues 34 to 72 is disordered; the sequence is AASASMNTTQGLPDTPSASGTSSDVPTAQSSAAGSEAAD. The segment covering 37–66 has biased composition (polar residues); it reads ASMNTTQGLPDTPSASGTSSDVPTAQSSAA. 5 helical membrane-spanning segments follow: residues 361-381, 387-407, 457-477, 500-520, and 535-555; these read LELT…FWLL, LIGN…LAFF, LGGC…YWVL, PFFI…MLNP, and PIIF…YWVV.

The protein belongs to the OXA1/ALB3/YidC family. Type 1 subfamily. As to quaternary structure, interacts with the Sec translocase complex via SecD. Specifically interacts with transmembrane segments of nascent integral membrane proteins during membrane integration.

Its subcellular location is the cell inner membrane. Functionally, required for the insertion and/or proper folding and/or complex formation of integral membrane proteins into the membrane. Involved in integration of membrane proteins that insert both dependently and independently of the Sec translocase complex, as well as at least some lipoproteins. Aids folding of multispanning membrane proteins. In Pseudomonas aeruginosa (strain LESB58), this protein is Membrane protein insertase YidC.